Consider the following 94-residue polypeptide: Integration host factor subunit beta (94 aa).

Belongs to the bacterial histone-like protein family. As to quaternary structure, heterodimer of an alpha and a beta chain.

Its function is as follows. This protein is one of the two subunits of integration host factor, a specific DNA-binding protein that functions in genetic recombination as well as in transcriptional and translational control. The chain is Integration host factor subunit beta from Actinobacillus succinogenes (strain ATCC 55618 / DSM 22257 / CCUG 43843 / 130Z).